The chain runs to 478 residues: Divinyl ether synthase CYP74D3 (478 aa).

Cysteine 432 is a binding site for heme.

It belongs to the cytochrome P450 family. 9-divinyl ether synthase subfamily. Not detected in leaves, stems or roots of healthy plants.

The protein localises to the cytoplasm. The protein resides in the cytosol. The enzyme catalyses (9S)-hydroperoxy-(10E,12Z)-octadecadienoate = colneleate + H2O. It catalyses the reaction (9S)-hydroperoxy-(10E,12Z,15Z)-octadecatrienoate = colnelenate + H2O. In terms of biological role, strictly inducible cytochrome P450 involved in the biosynthesis of the anti-fungal toxins colneleate and colnelenate. Can use (9S)-hydroperoxy-(10E,12Z)-octadecadienoate (9-HPOD) and (9S)-hydroperoxy-(10E,12Z,15Z)-octadecatrienoate (9-HPOT) as substrates, but has a very low activity with the corresponding 13-hydroperoxides (13-HPOD and 13-POT). In Nicotiana tabacum (Common tobacco), this protein is Divinyl ether synthase CYP74D3.